A 145-amino-acid chain; its full sequence is Hemoglobin subunit beta (145 aa).

The 145-residue stretch at 1–145 (MLTAEEKAAV…VANALAHRYH (145 aa)) folds into the Globin domain. A Phosphothreonine modification is found at Thr-11. A Phosphoserine modification is found at Ser-43. Residue Lys-58 is modified to N6-acetyllysine. A heme b-binding site is contributed by His-62. Lys-81 carries the N6-acetyllysine modification. His-91 contributes to the heme b binding site. An S-nitrosocysteine modification is found at Cys-92.

It belongs to the globin family. As to quaternary structure, heterotetramer of two alpha chains and two beta chains. In terms of tissue distribution, red blood cells.

Functionally, involved in oxygen transport from the lung to the various peripheral tissues. This chain is Hemoglobin subunit beta (HBB), found in Bos gaurus frontalis (Domestic gayal).